A 92-amino-acid polypeptide reads, in one-letter code: Em-like protein GEA6 (92 aa).

2 stretches are compositionally biased toward basic and acidic residues: residues 1-18 (MASQ…KKGE) and 37-51 (AEGR…KEQL). The segment at 1–92 (MASQQEKKQL…IDESKFRTKT (92 aa)) is disordered.

Belongs to the small hydrophilic plant seed protein family. In terms of tissue distribution, present only in nearly dry and dry seeds.

In terms of biological role, it is thought to provide protection for the cytoplasm during the desiccation stage of embryo development. The chain is Em-like protein GEA6 (EM6) from Arabidopsis thaliana (Mouse-ear cress).